The following is a 357-amino-acid chain: Alanine racemase (357 aa).

Lys-35 acts as the Proton acceptor; specific for D-alanine in catalysis. An N6-(pyridoxal phosphate)lysine modification is found at Lys-35. Residue Arg-130 participates in substrate binding. Residue Tyr-253 is the Proton acceptor; specific for L-alanine of the active site. Met-302 contributes to the substrate binding site.

This sequence belongs to the alanine racemase family. It depends on pyridoxal 5'-phosphate as a cofactor.

It catalyses the reaction L-alanine = D-alanine. It participates in amino-acid biosynthesis; D-alanine biosynthesis; D-alanine from L-alanine: step 1/1. Functionally, catalyzes the interconversion of L-alanine and D-alanine. May also act on other amino acids. The chain is Alanine racemase (alr) from Wigglesworthia glossinidia brevipalpis.